The sequence spans 921 residues: Probable TonB-dependent receptor NMB1497 (921 aa).

Residues 1 to 25 (MRSSFRLKPICFYLMGVTLYHYSYA) form the signal peptide. The 122-residue stretch at 53-174 (DKKVFTDARA…LAGSANLRTL (122 aa)) folds into the TBDR plug domain. The region spanning 185-921 (TYGLLLKGLT…TFLMTMSYKF (737 aa)) is the TBDR beta-barrel domain. Positions 904–921 (LTNFARGRTFLMTMSYKF) match the TonB C-terminal box motif.

This sequence belongs to the TonB-dependent receptor family.

The protein localises to the cell outer membrane. Functionally, probable receptor, TonB-dependent. This chain is Probable TonB-dependent receptor NMB1497, found in Neisseria meningitidis serogroup B (strain ATCC BAA-335 / MC58).